The sequence spans 94 residues: Neutrophil antibiotic peptide NP-1 (94 aa).

Positions 1-19 are cleaved as a signal peptide; that stretch reads MRTLTLLTALLLLALHTQA. Positions 20–62 are excised as a propeptide; that stretch reads KSPQGTAEEAPDQEQLVMEDQDISISFGGDKGTALQDADVKAG. Cystine bridges form between C65–C93, C67–C82, and C72–C92. Y84 is modified (phosphotyrosine).

Belongs to the alpha-defensin family. As to expression, highest expression in bone marrow and to a much lesser extent in small intestine.

The protein localises to the secreted. Its function is as follows. Active in vitro against S.aureus, fungi, Gram-positive and Gram-negative bacteria and to a lesser extent against an enveloped virus. The chain is Neutrophil antibiotic peptide NP-1 from Rattus norvegicus (Rat).